Reading from the N-terminus, the 371-residue chain is Histidinol-phosphate aminotransferase 2 (371 aa).

An N6-(pyridoxal phosphate)lysine modification is found at Lys-232.

Belongs to the class-II pyridoxal-phosphate-dependent aminotransferase family. Histidinol-phosphate aminotransferase subfamily. As to quaternary structure, homodimer. It depends on pyridoxal 5'-phosphate as a cofactor.

It catalyses the reaction L-histidinol phosphate + 2-oxoglutarate = 3-(imidazol-4-yl)-2-oxopropyl phosphate + L-glutamate. The protein operates within amino-acid biosynthesis; L-histidine biosynthesis; L-histidine from 5-phospho-alpha-D-ribose 1-diphosphate: step 7/9. The polypeptide is Histidinol-phosphate aminotransferase 2 (Methylococcus capsulatus (strain ATCC 33009 / NCIMB 11132 / Bath)).